The sequence spans 515 residues: ATP synthase subunit alpha (515 aa).

ATP is bound at residue 171 to 178 (GDRQTGKT).

This sequence belongs to the ATPase alpha/beta chains family. F-type ATPases have 2 components, CF(1) - the catalytic core - and CF(0) - the membrane proton channel. CF(1) has five subunits: alpha(3), beta(3), gamma(1), delta(1), epsilon(1). CF(0) has three main subunits: a(1), b(2) and c(9-12). The alpha and beta chains form an alternating ring which encloses part of the gamma chain. CF(1) is attached to CF(0) by a central stalk formed by the gamma and epsilon chains, while a peripheral stalk is formed by the delta and b chains.

The protein resides in the cell membrane. It catalyses the reaction ATP + H2O + 4 H(+)(in) = ADP + phosphate + 5 H(+)(out). Functionally, produces ATP from ADP in the presence of a proton gradient across the membrane. The alpha chain is a regulatory subunit. In Stenotrophomonas maltophilia (strain K279a), this protein is ATP synthase subunit alpha.